The chain runs to 590 residues: Potassium-transporting ATPase potassium-binding subunit (590 aa).

The next 4 helical transmembrane spans lie at 3-23 (AFLL…RPLG), 63-83 (HYAL…YALQ), 134-154 (GLAV…IALI), and 177-197 (LYVL…QGAI). The interval 217–244 (PKTDAQGNPIKDAQGNPVTEKATTQKQT) is disordered. 8 helical membrane-spanning segments follow: residues 284–304 (FVQM…FGAM), 312–332 (WAVL…EMWA), 359–379 (FGVV…CGAV), 388–408 (ALGG…FGGV), 411–431 (GLYG…LMIG), 450–470 (SIAI…AVLA), 515–535 (VALG…VLAM), and 558–578 (LFVV…YIPA).

The protein belongs to the KdpA family. The system is composed of three essential subunits: KdpA, KdpB and KdpC.

It localises to the cell inner membrane. Part of the high-affinity ATP-driven potassium transport (or Kdp) system, which catalyzes the hydrolysis of ATP coupled with the electrogenic transport of potassium into the cytoplasm. This subunit binds the periplasmic potassium ions and delivers the ions to the membrane domain of KdpB through an intramembrane tunnel. The protein is Potassium-transporting ATPase potassium-binding subunit of Ralstonia nicotianae (strain ATCC BAA-1114 / GMI1000) (Ralstonia solanacearum).